We begin with the raw amino-acid sequence, 495 residues long: Trimethylamine methyltransferase MttB (495 aa).

A non-standard amino acid (pyrrolysine) is located at residue pyrrolysine 334.

Belongs to the trimethylamine methyltransferase family. In terms of assembly, can form a complex with MttC.

It carries out the reaction Co(I)-[trimethylamine-specific corrinoid protein] + trimethylamine + H(+) = methyl-Co(III)-[trimethylamine-specific corrinoid protein] + dimethylamine. It functions in the pathway one-carbon metabolism; methanogenesis from trimethylamine. Functionally, catalyzes the transfer of a methyl group from trimethylamine to the corrinoid cofactor of MttC. In Methanosarcina barkeri, this protein is Trimethylamine methyltransferase MttB.